The following is an 88-amino-acid chain: Large ribosomal subunit protein bL27 (88 aa).

The tract at residues 1 to 21 is disordered; sequence MAHKKGASSSRNGRDSAAHRL.

Belongs to the bacterial ribosomal protein bL27 family.

The chain is Large ribosomal subunit protein bL27 from Mycobacterium ulcerans (strain Agy99).